Reading from the N-terminus, the 700-residue chain is Pentatricopeptide repeat-containing protein At3g26540 (700 aa).

PPR repeat units lie at residues Pro-95–Arg-125, Asp-126–Ala-160, Thr-161–Gly-195, Asn-196–Pro-226, Ser-227–Pro-261, Leu-262–Ala-296, Asp-297–Lys-327, Asp-328–Ser-362, Trp-363–Glu-389, Asp-394–Thr-428, Asn-429–Leu-459, Asp-461–Ser-495, Tyr-497–Ile-529, Asp-530–Arg-560, Asp-561–Pro-595, Asp-596–Lys-626, and Gln-632–Asp-662.

The protein belongs to the PPR family. PCMP-A subfamily.

This Arabidopsis thaliana (Mouse-ear cress) protein is Pentatricopeptide repeat-containing protein At3g26540 (PCMP-A5).